The primary structure comprises 281 residues: MKTYLELMRAGNCAMAAFAGLIGVLIAYNILSSASPYVSLSLFDTSLIFAIVFLVTGAGNGLNDYFDIEIDKVNKPSRPIPSGKISLKSALYFSLFLFITGITLAFLVNPLCGIIALFNSMVLILYAQSLKRTPFFGNASVGYLTGSTFLFGGAVFGMAGLQALVVLFLLATLATIAREIVKDVEDIVGDKKDGARTLPILIGAKKASYIAAAFGFTAMLASPVPYLQSILNEQYLFVVAIADIFFLIAVYQILGKKDAARSSKLFKFAMLFALISFIVGA.

7 helical membrane passes run 14–34 (AMAA…LSSA), 38–58 (VSLS…VTGA), 95–115 (LFLF…CGII), 149–169 (FLFG…VLFL), 207–227 (ASYI…VPYL), 235–255 (YLFV…QILG), and 259–279 (AARS…SFIV).

Belongs to the UbiA prenyltransferase family. DGGGP synthase subfamily. Requires Mg(2+) as cofactor.

It is found in the cell membrane. It carries out the reaction sn-3-O-(geranylgeranyl)glycerol 1-phosphate + (2E,6E,10E)-geranylgeranyl diphosphate = 2,3-bis-O-(geranylgeranyl)-sn-glycerol 1-phosphate + diphosphate. It functions in the pathway membrane lipid metabolism; glycerophospholipid metabolism. Prenyltransferase that catalyzes the transfer of the geranylgeranyl moiety of geranylgeranyl diphosphate (GGPP) to the C2 hydroxyl of (S)-3-O-geranylgeranylglyceryl phosphate (GGGP). This reaction is the second ether-bond-formation step in the biosynthesis of archaeal membrane lipids. In Methanococcoides burtonii (strain DSM 6242 / NBRC 107633 / OCM 468 / ACE-M), this protein is Digeranylgeranylglyceryl phosphate synthase.